A 1410-amino-acid polypeptide reads, in one-letter code: ABC transporter C family member 13 (1410 aa).

8 helical membrane-spanning segments follow: residues 23-43, 60-80, 88-108, 122-142, 148-168, 391-411, 474-494, and 505-525; these read IVLGFGANVVTLLLILILTIT, LLYVTPALGACLSCVDLVLLV, VILCFVPLSGFVMWIAVILSL, ILCFWWIFRFLTDALHLNMIF, QEICLIMLDIAFGISINVLRI, LSGLAITILLIPVNKWISVLI, VFFWATTPTLFSLCTFGLFAL, and FTCLALFNSLISPLNSFPWVI. One can recognise an ABC transmembrane type-1 1 domain in the interval 255–530; the sequence is CNNYSTPSLI…FPWVINGLID (276 aa). The ABC transporter 1 domain maps to 564–791; the sequence is VCVEDASCTW…ISPTFSLTNE (228 aa). Position 602–609 (602–609) interacts with ATP; sequence GEVGSGKT. 6 consecutive transmembrane segments (helical) span residues 844–864, 889–909, 963–985, 990–1009, 1087–1107, and 1111–1131; these read AVFSGWFITIVILVSAVLMQG, TSFYLMVLCIFCIINSILTLV, SLPFILNILLANFVGLLGIIVVL, VLFLLLLLPFWYIYSKLQVF, IVLFVAVMAVLGSGGNFPISF, and GLVGLALSYAAPLVSLLGSLL. The ABC transmembrane type-1 2 domain occupies 852-1139; sequence TIVILVSAVL…LLTSFTETEK (288 aa). Positions 1174-1407 constitute an ABC transporter 2 domain; the sequence is VEFHNVTMRY…DSSTFSSFVR (234 aa). Residue 1208-1215 participates in ATP binding; that stretch reads GRTGAGKS.

The protein belongs to the ABC transporter superfamily. ABCC family. Conjugate transporter (TC 3.A.1.208) subfamily. As to expression, ubiquitous.

The protein resides in the membrane. It catalyses the reaction ATP + H2O + xenobioticSide 1 = ADP + phosphate + xenobioticSide 2.. Its function is as follows. Pump for glutathione S-conjugates. The chain is ABC transporter C family member 13 (ABCC13) from Arabidopsis thaliana (Mouse-ear cress).